The following is an 816-amino-acid chain: Subtilisin-like protease SBT2.6 (816 aa).

A signal peptide spans 1-19 (MDIGCKVLVFFTCFLTVTA). Positions 20-126 (EIYIVTMEGE…VDRDWKVRKL (107 aa)) are cleaved as a propeptide — activation peptide. Residues 22-124 (YIVTMEGEPI…KSVDRDWKVR (103 aa)) form the Inhibitor I9 domain. The Peptidase S8 domain occupies 120–672 (DWKVRKLTTH…SGHVNPSAAL (553 aa)). Catalysis depends on charge relay system residues Asp160 and His235. Residues 418 to 492 (DCQKPEVLNK…SCIPGILITD (75 aa)) enclose the PA domain. N-linked (GlcNAc...) asparagine glycans are attached at residues Asn504 and Asn578. Ser597 (charge relay system) is an active-site residue. Asn702 carries N-linked (GlcNAc...) asparagine glycosylation.

It belongs to the peptidase S8 family.

It is found in the secreted. In Arabidopsis thaliana (Mouse-ear cress), this protein is Subtilisin-like protease SBT2.6.